The sequence spans 319 residues: Structure-specific endonuclease subunit SLX1 (319 aa).

In terms of domain architecture, GIY-YIG spans 20–103 (TFYCCYLLQS…QHGYKTHYIP (84 aa)). The SLX1-type zinc finger occupies 233–297 (CNLCGQCYDY…LPNFCMCPGC (65 aa)).

It belongs to the SLX1 family. As to quaternary structure, forms a heterodimer with SLX4. A divalent metal cation is required as a cofactor.

The protein localises to the nucleus. Its function is as follows. Catalytic subunit of the SLX1-SLX4 structure-specific endonuclease that resolves DNA secondary structures generated during DNA repair and recombination. Has endonuclease activity towards branched DNA substrates, introducing single-strand cuts in duplex DNA close to junctions with ss-DNA. The sequence is that of Structure-specific endonuclease subunit SLX1 from Vanderwaltozyma polyspora (strain ATCC 22028 / DSM 70294 / BCRC 21397 / CBS 2163 / NBRC 10782 / NRRL Y-8283 / UCD 57-17) (Kluyveromyces polysporus).